The sequence spans 351 residues: Riboflavin-binding protein RibY (351 aa).

An N-terminal signal peptide occupies residues M1–A19. The N-palmitoyl cysteine moiety is linked to residue C20. C20 carries S-diacylglycerol cysteine lipidation.

Belongs to the NMT1 family. As to quaternary structure, the complex is likely composed of an ATP-binding protein, a transmembrane protein (RibX) and a solute-binding protein (RibY).

Its subcellular location is the cell membrane. Functionally, part of an ABC transporter complex that transports riboflavin into the cell. Binds riboflavin. This chain is Riboflavin-binding protein RibY, found in Chloroflexus aurantiacus (strain ATCC 29366 / DSM 635 / J-10-fl).